A 353-amino-acid polypeptide reads, in one-letter code: Photosystem II protein D1 (353 aa).

Thr-2 is subject to N-acetylthreonine. Residue Thr-2 is modified to Phosphothreonine. 3 helical membrane passes run 29-46 (YIGWFGVLMIPTLLTATS), 118-133 (HFLLGVACYMGREWEL), and 142-156 (WIAVAYSAPVAAATA). His-118 is a chlorophyll a binding site. Tyr-126 contributes to the pheophytin a binding site. Asp-170 and Glu-189 together coordinate [CaMn4O5] cluster. Residues 197–218 (FHMLGVAGVFGGSLFSAMHGSL) form a helical membrane-spanning segment. His-198 serves as a coordination point for chlorophyll a. Residues His-215 and 264–265 (SF) contribute to the a quinone site. Residue His-215 coordinates Fe cation. His-272 contributes to the Fe cation binding site. A helical transmembrane segment spans residues 274–288 (FLAAWPVVGIWFTAL). [CaMn4O5] cluster contacts are provided by His-332, Glu-333, and Ala-344. Positions 345-353 (AIEAPAVNG) are excised as a propeptide.

This sequence belongs to the reaction center PufL/M/PsbA/D family. PSII is composed of 1 copy each of membrane proteins PsbA, PsbB, PsbC, PsbD, PsbE, PsbF, PsbH, PsbI, PsbJ, PsbK, PsbL, PsbM, PsbT, PsbX, PsbY, PsbZ, Psb30/Ycf12, at least 3 peripheral proteins of the oxygen-evolving complex and a large number of cofactors. It forms dimeric complexes. The cofactor is The D1/D2 heterodimer binds P680, chlorophylls that are the primary electron donor of PSII, and subsequent electron acceptors. It shares a non-heme iron and each subunit binds pheophytin, quinone, additional chlorophylls, carotenoids and lipids. D1 provides most of the ligands for the Mn4-Ca-O5 cluster of the oxygen-evolving complex (OEC). There is also a Cl(-1) ion associated with D1 and D2, which is required for oxygen evolution. The PSII complex binds additional chlorophylls, carotenoids and specific lipids.. In terms of processing, tyr-161 forms a radical intermediate that is referred to as redox-active TyrZ, YZ or Y-Z. C-terminally processed by CTPA; processing is essential to allow assembly of the oxygen-evolving complex and thus photosynthetic growth.

It is found in the plastid. Its subcellular location is the chloroplast thylakoid membrane. The catalysed reaction is 2 a plastoquinone + 4 hnu + 2 H2O = 2 a plastoquinol + O2. In terms of biological role, photosystem II (PSII) is a light-driven water:plastoquinone oxidoreductase that uses light energy to abstract electrons from H(2)O, generating O(2) and a proton gradient subsequently used for ATP formation. It consists of a core antenna complex that captures photons, and an electron transfer chain that converts photonic excitation into a charge separation. The D1/D2 (PsbA/PsbD) reaction center heterodimer binds P680, the primary electron donor of PSII as well as several subsequent electron acceptors. The chain is Photosystem II protein D1 from Conocephalum japonicum (Liverwort).